A 201-amino-acid polypeptide reads, in one-letter code: LexA repressor (201 aa).

A DNA-binding region (H-T-H motif) is located at residues 28–48 (RAEIANQLGFRSANAAEEHLK). Residues Ser118 and Lys155 each act as for autocatalytic cleavage activity in the active site.

This sequence belongs to the peptidase S24 family. In terms of assembly, homodimer.

It carries out the reaction Hydrolysis of Ala-|-Gly bond in repressor LexA.. Functionally, represses a number of genes involved in the response to DNA damage (SOS response), including recA and lexA. In the presence of single-stranded DNA, RecA interacts with LexA causing an autocatalytic cleavage which disrupts the DNA-binding part of LexA, leading to derepression of the SOS regulon and eventually DNA repair. The chain is LexA repressor from Saccharophagus degradans (strain 2-40 / ATCC 43961 / DSM 17024).